A 386-amino-acid chain; its full sequence is 5-hydroxytryptamine receptor 1B (386 aa).

Residues 1 to 42 lie on the Extracellular side of the membrane; sequence MEEQGIQCAPPPPAASQTGVPLVNLSHNCSAESHIYQDSIAL. N-linked (GlcNAc...) asparagine glycosylation is found at Asn-24 and Asn-28. A helical transmembrane segment spans residues 43–68; it reads PWKVLLVALLALITLATTLSNAFVIA. Over 69–82 the chain is Cytoplasmic; it reads TVYRTRKLHTPANY. Residues 83 to 107 traverse the membrane as a helical segment; sequence LIASLAVTDLLVSILVMPVSTMYTV. Over 108–115 the chain is Extracellular; the sequence is TGRWTLGQ. A helical transmembrane segment spans residues 116–141; it reads VVCDFWLSSDITCCTASIMHLCVIAL. A disulfide bond links Cys-118 and Cys-195. Positions 125 and 130 each coordinate ergotamine. The DRY motif; important for ligand-induced conformation changes and signaling motif lies at 142 to 144; the sequence is DRY. The Cytoplasmic portion of the chain corresponds to 142 to 161; the sequence is DRYWAITDAVEYAAKRTPKR. A helical membrane pass occupies residues 162 to 180; that stretch reads AAIMIALVWVFSISISLPP. The Extracellular segment spans residues 181-201; that stretch reads FFWRQAKAEEEVLTCLVNTDH. Val-197 is an ergotamine binding site. Residues 202–225 form a helical membrane-spanning segment; the sequence is VLYTVYSTGGAFYLPTLLLIALYG. The Cytoplasmic segment spans residues 226-311; it reads RIYVEARSRI…AARERKATKT (86 aa). A compositionally biased stretch (polar residues) spans 255–268; the sequence is DSPGSTTSVTSINS. The tract at residues 255–278 is disordered; it reads DSPGSTTSVTSINSRAPDLPSESG. A helical membrane pass occupies residues 312–333; that stretch reads LGIILGAFIVCWLPFFIISLVM. Topologically, residues 334 to 343 are extracellular; it reads PICKDACWFH. A helical membrane pass occupies residues 344 to 366; sequence MATLDFFNWLGYLNSLINPIIYT. Residues 361-365 carry the NPxxY motif; important for ligand-induced conformation changes and signaling motif; sequence NPIIY. The Cytoplasmic portion of the chain corresponds to 367 to 386; the sequence is MSNEDFKQAFHKLIRFKCAG. A lipid anchor (S-palmitoyl cysteine) is attached at Cys-384.

Belongs to the G-protein coupled receptor 1 family. As to quaternary structure, homodimer. Heterodimer with HTR1D. In terms of processing, phosphorylated. Desensitization of the receptor may be mediated by its phosphorylation. Palmitoylated.

It is found in the cell membrane. Functionally, G-protein coupled receptor for 5-hydroxytryptamine (serotonin). Also functions as a receptor for ergot alkaloid derivatives, various anxiolytic and antidepressant drugs and other psychoactive substances, such as lysergic acid diethylamide (LSD). Ligand binding causes a conformation change that triggers signaling via guanine nucleotide-binding proteins (G proteins) and modulates the activity of downstream effectors, such as adenylate cyclase. HTR1B is coupled to G(i)/G(o) G alpha proteins and mediates inhibitory neurotransmission by inhibiting adenylate cyclase activity. Arrestin family members inhibit signaling via G proteins and mediate activation of alternative signaling pathways. Regulates the release of 5-hydroxytryptamine, dopamine and acetylcholine in the brain, and thereby affects neural activity, nociceptive processing, pain perception, mood and behavior. Besides, plays a role in vasoconstriction of cerebral arteries. The chain is 5-hydroxytryptamine receptor 1B (HTR1B) from Cricetulus griseus (Chinese hamster).